The chain runs to 442 residues: Signal recognition particle 54 kDa protein (442 aa).

GTP contacts are provided by residues 106 to 113 (GLQGSGKT), 186 to 190 (DTAGR), and 244 to 247 (TKLD).

The protein belongs to the GTP-binding SRP family. SRP54 subfamily. Part of the signal recognition particle protein translocation system, which is composed of SRP and FtsY. Archaeal SRP consists of a 7S RNA molecule of 300 nucleotides and two protein subunits: SRP54 and SRP19.

The protein localises to the cytoplasm. The catalysed reaction is GTP + H2O = GDP + phosphate + H(+). Involved in targeting and insertion of nascent membrane proteins into the cytoplasmic membrane. Binds to the hydrophobic signal sequence of the ribosome-nascent chain (RNC) as it emerges from the ribosomes. The SRP-RNC complex is then targeted to the cytoplasmic membrane where it interacts with the SRP receptor FtsY. This chain is Signal recognition particle 54 kDa protein, found in Methanothermobacter thermautotrophicus (strain ATCC 29096 / DSM 1053 / JCM 10044 / NBRC 100330 / Delta H) (Methanobacterium thermoautotrophicum).